The chain runs to 81 residues: Gamma-conotoxin-like TeA53 (81 aa).

The N-terminal stretch at 1–19 (MQKLTILLLVAAVLMSTQA) is a signal peptide. Residues 20-42 (LNQEQHQRAKINLLSKRKPPAER) constitute a propeptide that is removed on maturation. Intrachain disulfides connect cysteine 49–cysteine 63, cysteine 56–cysteine 67, and cysteine 62–cysteine 72.

Belongs to the conotoxin O2 superfamily. In terms of tissue distribution, expressed by the venom duct.

It localises to the secreted. Gamma-conotoxins may act on voltage-gated non-specific cation pacemaker channels (HCN). In Conus textile (Cloth-of-gold cone), this protein is Gamma-conotoxin-like TeA53.